The primary structure comprises 254 residues: 5'-nucleotidase SurE (254 aa).

Residues D8, D9, S38, and N91 each coordinate a divalent metal cation.

This sequence belongs to the SurE nucleotidase family. Requires a divalent metal cation as cofactor.

It is found in the cytoplasm. It carries out the reaction a ribonucleoside 5'-phosphate + H2O = a ribonucleoside + phosphate. In terms of biological role, nucleotidase that shows phosphatase activity on nucleoside 5'-monophosphates. This chain is 5'-nucleotidase SurE, found in Anaeromyxobacter dehalogenans (strain 2CP-C).